The chain runs to 403 residues: Phosphopentomutase (403 aa).

Residues Asp-13, Asp-298, His-303, Asp-339, His-340, and His-351 each contribute to the Mn(2+) site.

The protein belongs to the phosphopentomutase family. It depends on Mn(2+) as a cofactor.

The protein resides in the cytoplasm. It catalyses the reaction 2-deoxy-alpha-D-ribose 1-phosphate = 2-deoxy-D-ribose 5-phosphate. The catalysed reaction is alpha-D-ribose 1-phosphate = D-ribose 5-phosphate. Its pathway is carbohydrate degradation; 2-deoxy-D-ribose 1-phosphate degradation; D-glyceraldehyde 3-phosphate and acetaldehyde from 2-deoxy-alpha-D-ribose 1-phosphate: step 1/2. Isomerase that catalyzes the conversion of deoxy-ribose 1-phosphate (dRib-1-P) and ribose 1-phosphate (Rib-1-P) to deoxy-ribose 5-phosphate (dRib-5-P) and ribose 5-phosphate (Rib-5-P), respectively. In Streptococcus pyogenes serotype M3 (strain ATCC BAA-595 / MGAS315), this protein is Phosphopentomutase.